We begin with the raw amino-acid sequence, 184 residues long: Photosystem I assembly protein Ycf4 (184 aa).

A run of 2 helical transmembrane segments spans residues 19–39 (ISNFCWACILFLGSLGFLLVG) and 57–77 (IIFFPQGIVMSFYGIAGLFIS).

The protein belongs to the Ycf4 family.

It localises to the plastid. Its subcellular location is the chloroplast thylakoid membrane. Its function is as follows. Seems to be required for the assembly of the photosystem I complex. The polypeptide is Photosystem I assembly protein Ycf4 (Drimys granadensis).